The sequence spans 108 residues: Protein YcgL (108 aa).

The YcgL domain maps to 12–96 (MFCVIYRSSK…SPEDLLKQHL (85 aa)).

This chain is Protein YcgL, found in Shigella dysenteriae serotype 1 (strain Sd197).